The primary structure comprises 368 residues: Glutaminyl-peptide cyclotransferase (368 aa).

Positions 1 to 23 (MAGERRDSKAAAFFCLAWALCLA) are cleaved as a signal peptide. A glycan (N-linked (GlcNAc...) asparagine) is linked at asparagine 53. Cysteine 143 and cysteine 169 form a disulfide bridge. Aspartate 164 is a binding site for Zn(2+). The active-site Proton acceptor is the glutamate 207. Glutamate 208 is a binding site for Zn(2+). The active-site Proton acceptor is the aspartate 254. N-linked (GlcNAc...) asparagine glycosylation occurs at asparagine 292. A Zn(2+)-binding site is contributed by histidine 336. Asparagine 352 carries N-linked (GlcNAc...) asparagine glycosylation.

Belongs to the glutaminyl-peptide cyclotransferase family. As to expression, expressed by the venom gland.

It is found in the secreted. The catalysed reaction is N-terminal L-glutaminyl-[peptide] = N-terminal 5-oxo-L-prolyl-[peptide] + NH4(+). Its function is as follows. Responsible for the biosynthesis of pyroglutamyl peptides. Has a bias against acidic and tryptophan residues adjacent to the N-terminal glutaminyl residue and a lack of importance of chain length after the second residue. Also catalyzes N-terminal pyroglutamate formation. The chain is Glutaminyl-peptide cyclotransferase (QPCT) from Boiga irregularis (Brown tree snake).